The sequence spans 287 residues: Pyridoxal kinase PdxY (287 aa).

Residues Ser10 and 45-46 each bind substrate; that span reads TQ. ATP-binding positions include Asp112, Ala144, Glu149, Lys182, and 209-212; that span reads RPLV. Asp224 contributes to the substrate binding site.

The protein belongs to the pyridoxine kinase family. PdxY subfamily. As to quaternary structure, homodimer. Requires Mg(2+) as cofactor.

The catalysed reaction is pyridoxal + ATP = pyridoxal 5'-phosphate + ADP + H(+). It functions in the pathway cofactor metabolism; pyridoxal 5'-phosphate salvage; pyridoxal 5'-phosphate from pyridoxal: step 1/1. Its function is as follows. Pyridoxal kinase involved in the salvage pathway of pyridoxal 5'-phosphate (PLP). Catalyzes the phosphorylation of pyridoxal to PLP. The polypeptide is Pyridoxal kinase PdxY (Shigella flexneri).